The primary structure comprises 651 residues: Intraflagellar transport protein 70A (651 aa).

TPR repeat units follow at residues 8–41 (DGEY…QYRS), 42–75 (RAGL…SPEV), 140–173 (PESE…MGYK), 175–207 (DLSF…GIRE), 372–405 (LTEQ…YDET), 410–443 (IPVL…CNEH), and 445–478 (IWKL…HYDN). Positions 494 to 521 (YIMTSQNEEAEELMRKIEKEEEQIAYEN) form a coiled coil. Residues 530–563 (CIVNLVIGTLYCAKGNYEFGISRVIKSLEPYNKK) form a TPR 8 repeat.

This sequence belongs to the TTC30/dfy-1/fleer family.

The protein localises to the cell projection. The protein resides in the cilium. In terms of biological role, required for polyglutamylation of axonemal tubulin. Plays a role in anterograde intraflagellar transport (IFT), the process by which cilia precursors are transported from the base of the cilium to the site of their incorporation at the tip. This is Intraflagellar transport protein 70A (ift70a) from Xenopus laevis (African clawed frog).